Here is a 95-residue protein sequence, read N- to C-terminus: Small integral membrane protein 26 (95 aa).

A helical membrane pass occupies residues 13–35 (MSVVYGIGTWSVLGSLLYYSRTM).

It belongs to the SMIM26 family. As to quaternary structure, interacts with AGK and SLC25A11. As to expression, detected in kidney (at protein level).

The protein localises to the mitochondrion outer membrane. May play a role in cell viability. This chain is Small integral membrane protein 26, found in Homo sapiens (Human).